The sequence spans 295 residues: Methionine aminopeptidase (295 aa).

Histidine 63 provides a ligand contact to substrate. Residues aspartate 83, aspartate 94, and histidine 154 each coordinate a divalent metal cation. Histidine 162 contributes to the substrate binding site. A divalent metal cation is bound by residues glutamate 188 and glutamate 281.

Belongs to the peptidase M24A family. Methionine aminopeptidase archaeal type 2 subfamily. As to quaternary structure, monomer. Fe(2+) is required as a cofactor. Co(2+) serves as cofactor. Requires Ni(2+) as cofactor. The cofactor is Mn(2+).

The catalysed reaction is Release of N-terminal amino acids, preferentially methionine, from peptides and arylamides.. In terms of biological role, removes the N-terminal methionine from nascent proteins. The N-terminal methionine is often cleaved when the second residue in the primary sequence is small and uncharged (Met-Ala-, Cys, Gly, Pro, Ser, Thr, or Val). The chain is Methionine aminopeptidase from Thermococcus onnurineus (strain NA1).